Consider the following 112-residue polypeptide: Ferredoxin-2 (112 aa).

4Fe-4S ferredoxin-type domains are found at residues 2–30 (TYVVTDNCIACKYTDCVEVCPVDCFYEGE) and 31–60 (NTLVIHPDECIDCGVCEPECPADAIRPDTE). The [3Fe-4S] cluster site is built by Cys-9 and Cys-17. Residues Cys-21, Cys-40, Cys-43, and Cys-46 each coordinate [4Fe-4S] cluster. Residue Cys-50 participates in [3Fe-4S] cluster binding. Positions 85-103 (DPMPDHKKYDGETGKREKY) are enriched in basic and acidic residues. Residues 85–112 (DPMPDHKKYDGETGKREKYFSPNPGTGD) are disordered.

[4Fe-4S] cluster is required as a cofactor. [3Fe-4S] cluster serves as cofactor.

Ferredoxins are iron-sulfur proteins that transfer electrons in a wide variety of metabolic reactions. The chain is Ferredoxin-2 (fdxA) from Rhodobacter capsulatus (strain ATCC BAA-309 / NBRC 16581 / SB1003).